The following is a 93-amino-acid chain: DNA-directed RNA polymerase subunit omega (93 aa).

Belongs to the RNA polymerase subunit omega family. As to quaternary structure, the RNAP catalytic core consists of 2 alpha, 1 beta, 1 beta' and 1 omega subunit. When a sigma factor is associated with the core the holoenzyme is formed, which can initiate transcription.

The enzyme catalyses RNA(n) + a ribonucleoside 5'-triphosphate = RNA(n+1) + diphosphate. Functionally, promotes RNA polymerase assembly. Latches the N- and C-terminal regions of the beta' subunit thereby facilitating its interaction with the beta and alpha subunits. This Actinobacillus pleuropneumoniae serotype 3 (strain JL03) protein is DNA-directed RNA polymerase subunit omega.